A 156-amino-acid chain; its full sequence is Small ribosomal subunit protein uS7 (156 aa).

The protein belongs to the universal ribosomal protein uS7 family. As to quaternary structure, part of the 30S ribosomal subunit. Contacts proteins S9 and S11.

In terms of biological role, one of the primary rRNA binding proteins, it binds directly to 16S rRNA where it nucleates assembly of the head domain of the 30S subunit. Is located at the subunit interface close to the decoding center, probably blocks exit of the E-site tRNA. This is Small ribosomal subunit protein uS7 from Rippkaea orientalis (strain PCC 8801 / RF-1) (Cyanothece sp. (strain PCC 8801)).